We begin with the raw amino-acid sequence, 681 residues long: RNA polymerase sigma factor RpoD (681 aa).

Disordered regions lie at residues 1–60 and 239–270; these read MKKK…ETAK and DDDENSVSDPKKDDDSEEDEENEERKKVVSEK. Positions 261–270 are enriched in basic and acidic residues; sequence EERKKVVSEK. The segment at 446 to 516 is sigma-70 factor domain-2; the sequence is MAKSNLRLVV…SRAIADQART (71 aa). The Interaction with polymerase core subunit RpoC motif lies at 470–473; it reads DLIQ. The tract at residues 525–601 is sigma-70 factor domain-3; the sequence is DTINRINKVM…DKNIVSSIDH (77 aa). A sigma-70 factor domain-4 region spans residues 614–668; the sequence is VLDQLNEREKAVIRMRFGLLDDESDRTLEEIGKELNVTRERVRQIESSAIKKLRS. A DNA-binding region (H-T-H motif) is located at residues 641–660; it reads LEEIGKELNVTRERVRQIES.

This sequence belongs to the sigma-70 factor family. RpoD/SigA subfamily. Interacts transiently with the RNA polymerase catalytic core.

The protein localises to the cytoplasm. Its function is as follows. Sigma factors are initiation factors that promote the attachment of RNA polymerase to specific initiation sites and are then released. This sigma factor is the primary sigma factor during exponential growth. The protein is RNA polymerase sigma factor RpoD of Helicobacter pylori (strain J99 / ATCC 700824) (Campylobacter pylori J99).